A 200-amino-acid chain; its full sequence is Small ribosomal subunit protein eS1 (200 aa).

Belongs to the eukaryotic ribosomal protein eS1 family.

The protein is Small ribosomal subunit protein eS1 of Thermococcus sibiricus (strain DSM 12597 / MM 739).